The sequence spans 691 residues: Elongation factor G (691 aa).

One can recognise a tr-type G domain in the interval 8–282 (ERVRNIGIAA…AVVDYLPAPV (275 aa)). GTP contacts are provided by residues 17–24 (AHIDAGKT), 81–85 (DTPGH), and 135–138 (NKMD).

The protein belongs to the TRAFAC class translation factor GTPase superfamily. Classic translation factor GTPase family. EF-G/EF-2 subfamily.

Its subcellular location is the cytoplasm. In terms of biological role, catalyzes the GTP-dependent ribosomal translocation step during translation elongation. During this step, the ribosome changes from the pre-translocational (PRE) to the post-translocational (POST) state as the newly formed A-site-bound peptidyl-tRNA and P-site-bound deacylated tRNA move to the P and E sites, respectively. Catalyzes the coordinated movement of the two tRNA molecules, the mRNA and conformational changes in the ribosome. The protein is Elongation factor G of Prochlorococcus marinus (strain MIT 9313).